Reading from the N-terminus, the 164-residue chain is UPF0114 protein YqhA (164 aa).

A run of 3 helical transmembrane segments spans residues 15 to 35 (LLAP…LKFF), 53 to 73 (LILV…LVMV), and 136 to 156 (LMWY…MGYL).

Belongs to the UPF0114 family.

The protein resides in the cell membrane. The protein is UPF0114 protein YqhA of Salmonella agona (strain SL483).